We begin with the raw amino-acid sequence, 457 residues long: V-type ATP synthase beta chain (457 aa).

Belongs to the ATPase alpha/beta chains family.

Produces ATP from ADP in the presence of a proton gradient across the membrane. The V-type beta chain is a regulatory subunit. This Clostridioides difficile (strain 630) (Peptoclostridium difficile) protein is V-type ATP synthase beta chain.